The sequence spans 175 residues: MNCPYCSHPDSKVIDSRDVDDGVRRRRECVVCGQRFTTYERFQPAGLFVVKKDQRREEFNKEKLLSGLRRACEKRPLPAGAVDKVAGDIEAELYNMGKAEIPSTLLGDMVMERLKMLDNIAYVRFASVYREFTDITQLKKVVDNLVNGQDEGIHKGQLSLLPEDKAAPKTRYQRR.

The segment at Cys3–Cys32 is a zinc-finger region. In terms of domain architecture, ATP-cone spans Leu47–Gln137.

Belongs to the NrdR family. The cofactor is Zn(2+).

Functionally, negatively regulates transcription of bacterial ribonucleotide reductase nrd genes and operons by binding to NrdR-boxes. The polypeptide is Transcriptional repressor NrdR (Dehalococcoides mccartyi (strain ATCC BAA-2100 / JCM 16839 / KCTC 5957 / BAV1)).